A 1369-amino-acid chain; its full sequence is MutS protein homolog 5 (1369 aa).

The disordered stretch occupies residues 138–190; the sequence is IYEDGTTEEGTSEDTVPTWDSSLAYSTDETTAEKEEKEEDEDDDDEGLPAKLN. Residues 173 to 184 show a composition bias toward acidic residues; sequence EKEEDEDDDDEG. 639–646 provides a ligand contact to ATP; that stretch reads GPNACGKS. Disordered stretches follow at residues 880–915, 935–1135, 1153–1182, and 1248–1278; these read SMRN…SVLS, KKKK…RSSN, LKSQ…HSQN, and NFIF…SSIS. The span at 884–894 shows a compositional bias: basic and acidic residues; it reads VSEEIEKERSE. 2 stretches are compositionally biased toward polar residues: residues 895–915 and 941–950; these read ASTP…SVLS and TGSSMESSMS. The span at 954–967 shows a compositional bias: acidic residues; that stretch reads FQEEDEGTEGEEDQ. The span at 991-1003 shows a compositional bias: polar residues; it reads QSINSRHSFSTRT. A compositionally biased stretch (low complexity) spans 1024–1037; that stretch reads STSTSSPGPSASKS. Residues 1049 to 1065 are compositionally biased toward polar residues; sequence VKESQVLETPKQLSISS. Over residues 1073 to 1084 the composition is skewed to basic and acidic residues; it reads SSEKDVISRVSE. Polar residues-rich tracts occupy residues 1111-1124 and 1153-1167; these read KNRS…QSAR and LKSQ…TPRS. Basic and acidic residues predominate over residues 1254-1263; sequence PEPRSSEKQR.

It belongs to the DNA mismatch repair MutS family. As to quaternary structure, heterooligomer of him-14 and msh-5. Interacts with the brc-1-brd-1 heterodimer. In terms of tissue distribution, expressed in the germline.

It is found in the chromosome. In terms of biological role, crucial component in meiotic recombination, functioning at some point after the initiation step of recombination. Plays a role in promoting the crossover outcome of meiotic recombination events. Required for formation of normal meiotic crossover, and crossover and chiasmata generated by artificially made DNA breaks. Together with him-14 and zhp-3 plays a role in the activation of DNA damage-dependent apoptosis at the DNA damage checkpoint in pachytene cells. This chain is MutS protein homolog 5, found in Caenorhabditis elegans.